Consider the following 371-residue polypeptide: Gustatory receptor-like 65a (371 aa).

Over 1-13 (MREVNLLNRFTRQ) the chain is Cytoplasmic. The chain crosses the membrane as a helical span at residues 14-34 (FLFLIVLVTQICGVATFVYNS). Residues 35 to 42 (KAQCFRQS) are Extracellular-facing. A helical transmembrane segment spans residues 43–63 (GFLRFYSSLVLIFLALFLIVT). The Cytoplasmic segment spans residues 64-72 (TSKMFHNLQ). Residues 73–93 (AVWPYVVGSVIILVVRIHGLL) traverse the membrane as a helical segment. Residues 94 to 126 (ESAEIVELLNQMLRIMRQVNLMARHPNLFRLKH) are Extracellular-facing. The helical transmembrane segment at 127–147 (LLLLLLALQNLLRSLNTIVGI) threads the bilayer. At 148–161 (SNHSAEAYDSFLNS) the chain is on the cytoplasmic side. The helical transmembrane segment at 162 to 182 (VILLIILAVLLSFLLQITINI) threads the bilayer. Over 183–251 (CLFVVLIATY…FHITVRIIRH (69 aa)) the chain is Extracellular. Residues 252–272 (FRFHWLCAIIYGLLPFFSLTA) traverse the membrane as a helical segment. The Cytoplasmic portion of the chain corresponds to 273 to 277 (KDQNG). The chain crosses the membrane as a helical span at residues 278-298 (FNFLIISALNIIFQWTIFAIL). At 299–371 (SRESRITRSL…FVNRLEYLHI (73 aa)) the chain is on the extracellular side.

It localises to the cell membrane. This Drosophila melanogaster (Fruit fly) protein is Gustatory receptor-like 65a.